The sequence spans 404 residues: MEGKGVLEGRYEMGRVLGHGNFGRVHAARDVRTGRAVAMKVVSKDKVERAGMAEQIKREIAVMKMVSHPSVVELHEVMATRTKVYLALELVRGGELFDRIARHGRVGEGVARRYFRQLVSAVDFCHGRGVYHRDLKPENLLLDEAGNLKVADFGLSALACHARPDGLLHTACGTPAYVAPEVLAGNGYDGAKADLWSCGVILYVLLAGALPFQDDNLVCMYRKMRRGDFCCPPWVTTDARKLIKSLLDPNPGTRITVAGLLETPWFRKTAPVPRPIIADPAAAPVDTRGNAGDDKDEPPEVLNAFHLISLSEGFDLSPLFEHDPAASPGRATARAGGTRFATREAASGVVARLEALAMGGARVAPSLLMVDVKKDGGDAMEYRPFFSEELRPALKDIVWSPAAT.

Residues 11-266 (YEMGRVLGHG…VAGLLETPWF (256 aa)) form the Protein kinase domain. ATP contacts are provided by residues 17-25 (LGHGNFGRV) and K40. The active-site Proton acceptor is D134. Residues 152 to 181 (DFGLSALACHARPDGLLHTACGTPAYVAPE) are activation loop. In terms of domain architecture, NAF spans 294–321 (DKDEPPEVLNAFHLISLSEGFDLSPLFE). The interval 335–356 (AGGTRFATREAASGVVARLEAL) is PPI.

The protein belongs to the protein kinase superfamily. CAMK Ser/Thr protein kinase family. SNF1 subfamily. It depends on Mn(2+) as a cofactor.

It carries out the reaction L-seryl-[protein] + ATP = O-phospho-L-seryl-[protein] + ADP + H(+). It catalyses the reaction L-threonyl-[protein] + ATP = O-phospho-L-threonyl-[protein] + ADP + H(+). Its function is as follows. CIPK serine-threonine protein kinases interact with CBL proteins. Binding of a CBL protein to the regulatory NAF domain of CIPK protein lead to the activation of the kinase in a calcium-dependent manner. In Oryza sativa subsp. japonica (Rice), this protein is Putative CBL-interacting protein kinase 27 (CIPK27).